Consider the following 92-residue polypeptide: Small ribosomal subunit protein uS19 (92 aa).

Belongs to the universal ribosomal protein uS19 family.

Its function is as follows. Protein S19 forms a complex with S13 that binds strongly to the 16S ribosomal RNA. The protein is Small ribosomal subunit protein uS19 of Gloeobacter violaceus (strain ATCC 29082 / PCC 7421).